A 162-amino-acid polypeptide reads, in one-letter code: NADH-quinone oxidoreductase subunit I (162 aa).

2 4Fe-4S ferredoxin-type domains span residues leucine 52–glycine 82 and valine 93–asparagine 122. [4Fe-4S] cluster-binding residues include cysteine 62, cysteine 65, cysteine 68, cysteine 72, cysteine 102, cysteine 105, cysteine 108, and cysteine 112.

The protein belongs to the complex I 23 kDa subunit family. NDH-1 is composed of 14 different subunits. Subunits NuoA, H, J, K, L, M, N constitute the membrane sector of the complex. [4Fe-4S] cluster serves as cofactor.

It is found in the cell inner membrane. The enzyme catalyses a quinone + NADH + 5 H(+)(in) = a quinol + NAD(+) + 4 H(+)(out). Its function is as follows. NDH-1 shuttles electrons from NADH, via FMN and iron-sulfur (Fe-S) centers, to quinones in the respiratory chain. The immediate electron acceptor for the enzyme in this species is believed to be ubiquinone. Couples the redox reaction to proton translocation (for every two electrons transferred, four hydrogen ions are translocated across the cytoplasmic membrane), and thus conserves the redox energy in a proton gradient. This Bradyrhizobium sp. (strain ORS 278) protein is NADH-quinone oxidoreductase subunit I.